A 197-amino-acid polypeptide reads, in one-letter code: Imidazoleglycerol-phosphate dehydratase (197 aa).

This sequence belongs to the imidazoleglycerol-phosphate dehydratase family.

Its subcellular location is the cytoplasm. The catalysed reaction is D-erythro-1-(imidazol-4-yl)glycerol 3-phosphate = 3-(imidazol-4-yl)-2-oxopropyl phosphate + H2O. Its pathway is amino-acid biosynthesis; L-histidine biosynthesis; L-histidine from 5-phospho-alpha-D-ribose 1-diphosphate: step 6/9. The chain is Imidazoleglycerol-phosphate dehydratase from Pseudomonas fluorescens (strain ATCC BAA-477 / NRRL B-23932 / Pf-5).